Consider the following 775-residue polypeptide: ATP-dependent 6-phosphofructokinase 2 (775 aa).

The N-terminal catalytic PFK domain 1 stretch occupies residues 1-390 (MTNTILDTYS…YHSAYRHLNT (390 aa)). ATP is bound by residues Gly-25, 88-89 (RC), and 118-121 (GDGS). Asp-119 contributes to the Mg(2+) binding site. Substrate is bound by residues 164–166 (SID), Arg-201, 208–210 (MGR), Glu-264, Arg-292, and 298–301 (HIQR). Residue Asp-166 is the Proton acceptor of the active site. The segment at 391-404 (SDHPKMVLPEDKRM) is interdomain linker. The tract at residues 405–775 (RVAIIHVGAP…GRSSLYAIPN (371 aa)) is C-terminal regulatory PFK domain 2. Residues 537–541 (SMSNN), 582–584 (QGA), Asp-640, and 672–675 (HFQQ) contribute to the beta-D-fructose 2,6-bisphosphate site.

The protein belongs to the phosphofructokinase type A (PFKA) family. ATP-dependent PFK group I subfamily. Eukaryotic two domain clade 'E' sub-subfamily. As to quaternary structure, homotetramer. It depends on Mg(2+) as a cofactor.

It is found in the cytoplasm. The catalysed reaction is beta-D-fructose 6-phosphate + ATP = beta-D-fructose 1,6-bisphosphate + ADP + H(+). It functions in the pathway carbohydrate degradation; glycolysis; D-glyceraldehyde 3-phosphate and glycerone phosphate from D-glucose: step 3/4. With respect to regulation, allosterically activated by ADP, AMP, or fructose 2,6-bisphosphate, and allosterically inhibited by ATP or citrate. In terms of biological role, catalyzes the phosphorylation of D-fructose 6-phosphate to fructose 1,6-bisphosphate by ATP, the first committing step of glycolysis. The sequence is that of ATP-dependent 6-phosphofructokinase 2 (pfkB) from Aspergillus oryzae (strain ATCC 42149 / RIB 40) (Yellow koji mold).